The sequence spans 825 residues: MVSSKLSFVATAVAALAPLASAFDASSRSNLAIYWGQGPNQLRLSHFCQETSLDIINIGFINYFPDMSPGHWPGSNFGNQCDGSVYVTNDGVVTKLLSGCHQIMEDIPICQAAGKKVLLSIGGAYPPDQSILSEDSAVAFATFLWGAFGPVAEGWEGPRPFGDVVVDGFDFDIEHNGGFGYATMVNTFRQYFNQVPERKFYLSAAPQCIIPDAQLSDAIFNAAFDFIWIQYYNTAACSAKSFIDTSLGTFNFDAWVTVLKASASKDAKLYVGLPASETAANQGYYLTPDEVESLVSTYMDRYPDTFGGIMLWEATASENNQIDGAPYADHMKDILLHCDPSPPVTSSSAVPSSTPVTTPSPSSSAVPSSTPAVSETPSPSSSAVPSSTPVASSTPVVPGTSASSSPVSSSSAIAPSTPVVPGTSTPSSTPVASSTPVVPGTSASSSPVSSSSAVASSTPVVPGTSVPSSTPAIPGGSSSSSEAVASSTPLVTLTLTVSPTPAPSSSESSSTDLSSSTQTDVGTAPSQPAGPSTTATATTSSSSSSTDESSTTVGSGNGNGSGSTTTTAATDSITAAPTATSSATATGATSEPVTITTIIVTSYIDICPTGFTTVTTTYTTTYCPGTNTATATATVTNPPSGPGGAGSQTTAPTVPEGWTTTVTVCTQCAAKPTTVTLTLPVTETGSTSTDAVPAPPAATGEGSNPTQPSGASPTGGNGSFSEEPVPPPAVTQVSTSTEIVTLVRPTSSRPLILGTGTVHPSSTLAVKPSAKPSGQNSGSSSHVPIPPSYTQEAVSPLSTGAASRVTGLGHGLVLTVLTLSAFFVL.

The signal sequence occupies residues 1–22 (MVSSKLSFVATAVAALAPLASA). Residues 29–338 (SNLAIYWGQG…DHMKDILLHC (310 aa)) enclose the GH18 domain. E174 acts as the Proton donor in catalysis. Disordered stretches follow at residues 338 to 568 (CDPS…TTTA), 680 to 736 (PVTE…VSTS), and 750 to 792 (PLIL…YTQE). The span at 344–554 (VTSSSAVPSS…STDESSTTVG (211 aa)) shows a compositional bias: low complexity. N559 carries N-linked (GlcNAc...) asparagine glycosylation. A compositionally biased stretch (polar residues) spans 701–712 (EGSNPTQPSGAS). An N-linked (GlcNAc...) asparagine glycan is attached at N717. The span at 772–792 (PSGQNSGSSSHVPIPPSYTQE) shows a compositional bias: polar residues. G800 carries the GPI-anchor amidated glycine lipid modification. A propeptide spans 801 to 825 (AASRVTGLGHGLVLTVLTLSAFFVL) (removed in mature form).

It belongs to the glycosyl hydrolase 18 family. Chitinase class III subfamily. Post-translationally, O-mannosylated by pmt4.

It localises to the cell membrane. The protein localises to the secreted. The protein resides in the cell wall. The enzyme catalyses Random endo-hydrolysis of N-acetyl-beta-D-glucosaminide (1-&gt;4)-beta-linkages in chitin and chitodextrins.. Its activity is regulated as follows. The cyclic peptide natural product argifin acts as a specific inhibitor. Its function is as follows. GPI-anchored chitinase involved in the degradation of chitin, a component of the cell walls of fungi and exoskeletal elements of some animals (including worms and arthropods). Required to reshape the cell wall at the sites where cell wall remodeling and/or cell wall maturation actively take place such as sites of conidia formation. The sequence is that of Endochitinase A1 (chiA1) from Aspergillus fumigatus (Neosartorya fumigata).